A 483-amino-acid chain; its full sequence is Isocitrate dehydrogenase [NADP] (483 aa).

Thr-74 contributes to the NADP(+) binding site. Ser-83, Asn-85, Arg-89, Arg-99, and Arg-121 together coordinate D-threo-isocitrate. Residue Asp-232 participates in Mg(2+) binding. NADP(+) contacts are provided by residues 264–270 and Asn-277; that span reads HGSAPDI.

The protein belongs to the isocitrate and isopropylmalate dehydrogenases family. Homodimer. Mg(2+) is required as a cofactor. It depends on Mn(2+) as a cofactor.

It carries out the reaction D-threo-isocitrate + NADP(+) = 2-oxoglutarate + CO2 + NADPH. Its function is as follows. Catalyzes the oxidative decarboxylation of isocitrate to 2-oxoglutarate and carbon dioxide with the concomitant reduction of NADP(+). In Rickettsia prowazekii (strain Madrid E), this protein is Isocitrate dehydrogenase [NADP] (icd).